A 339-amino-acid polypeptide reads, in one-letter code: RNA 3'-terminal phosphate cyclase (339 aa).

ATP-binding positions include Gln103 and 283–287 (HLADQ). His308 serves as the catalytic Tele-AMP-histidine intermediate.

The protein belongs to the RNA 3'-terminal cyclase family. Type 1 subfamily.

The protein resides in the cytoplasm. It catalyses the reaction a 3'-end 3'-phospho-ribonucleotide-RNA + ATP = a 3'-end 2',3'-cyclophospho-ribonucleotide-RNA + AMP + diphosphate. Functionally, catalyzes the conversion of 3'-phosphate to a 2',3'-cyclic phosphodiester at the end of RNA. The mechanism of action of the enzyme occurs in 3 steps: (A) adenylation of the enzyme by ATP; (B) transfer of adenylate to an RNA-N3'P to produce RNA-N3'PP5'A; (C) and attack of the adjacent 2'-hydroxyl on the 3'-phosphorus in the diester linkage to produce the cyclic end product. The biological role of this enzyme is unknown but it is likely to function in some aspects of cellular RNA processing. This Salmonella typhimurium (strain LT2 / SGSC1412 / ATCC 700720) protein is RNA 3'-terminal phosphate cyclase.